Reading from the N-terminus, the 374-residue chain is Lipopolysaccharide glucosyltransferase WaaG (374 aa).

Residues Gly15 and Asp19 each coordinate UDP-alpha-D-glucose. The interval 103 to 132 is membrane-interacting region; sequence YAEKVAQEKGFLYRLTSRYRHYAAFERATF. UDP-alpha-D-glucose contacts are provided by Arg173, Arg208, Lys209, Arg261, Glu281, Ala283, Gly284, Ile285, Val286, and Glu289.

The protein belongs to the glycosyltransferase group 1 family. Glycosyltransferase 4 subfamily.

It localises to the cell inner membrane. The protein operates within bacterial outer membrane biogenesis; LPS core biosynthesis. Its activity is regulated as follows. Inhibited by divalent metal ions such as Mg(2+), Mn(2+), Ca(2+), Zn(2+), Co(2+), Ni(2+) and Cu(2+). Glucosyltransferase involved in the biosynthesis of the core oligosaccharide region of lipopolysaccharide (LPS). Catalyzes the addition of the first outer-core glucose from UDP-glucose to the inner-core heptose II. Cannot use other sugar donors, such as UDP-galactose, UDP-glucuronic acid, UDP-galacuronic acid, GDP-mannose, ADP-glucose and GDP-glucose. In the absence of a lipid acceptor, can slowly hydrolyze UDP-glucose. This is Lipopolysaccharide glucosyltransferase WaaG from Escherichia coli (strain K12).